The primary structure comprises 24 residues: uncharacterized protein (24 aa).

The Cytoplasmic portion of the chain corresponds to 1–3; the sequence is MKK. The chain crosses the membrane as a helical span at residues 4–24; it reads TTIIMMGVAIIVVLGTELGWW.

It is found in the cell inner membrane. This is an uncharacterized protein from Escherichia coli (strain K12).